A 202-amino-acid polypeptide reads, in one-letter code: Probable GTP-binding protein EngB (202 aa).

Residues 26 to 200 enclose the EngB-type G domain; it reads VSKEIAFTGS…KAQLDSWFSI (175 aa). Residues 34 to 41, 61 to 65, 79 to 82, 146 to 149, and 179 to 181 each bind GTP; these read GSSNVGKS, GSTKT, DLPG, NKAD, and FSS. Ser-41 and Thr-63 together coordinate Mg(2+).

The protein belongs to the TRAFAC class TrmE-Era-EngA-EngB-Septin-like GTPase superfamily. EngB GTPase family. Mg(2+) serves as cofactor.

Necessary for normal cell division and for the maintenance of normal septation. This chain is Probable GTP-binding protein EngB, found in Baumannia cicadellinicola subsp. Homalodisca coagulata.